Here is a 92-residue protein sequence, read N- to C-terminus: Small ribosomal subunit protein uS19 (92 aa).

The protein belongs to the universal ribosomal protein uS19 family.

Protein S19 forms a complex with S13 that binds strongly to the 16S ribosomal RNA. In Buchnera aphidicola subsp. Acyrthosiphon pisum (strain 5A), this protein is Small ribosomal subunit protein uS19.